The following is a 117-amino-acid chain: Large ribosomal subunit protein bL20 (117 aa).

This sequence belongs to the bacterial ribosomal protein bL20 family.

Functionally, binds directly to 23S ribosomal RNA and is necessary for the in vitro assembly process of the 50S ribosomal subunit. It is not involved in the protein synthesizing functions of that subunit. This is Large ribosomal subunit protein bL20 from Campylobacter jejuni subsp. jejuni serotype O:2 (strain ATCC 700819 / NCTC 11168).